Reading from the N-terminus, the 226-residue chain is UPF0173 metal-dependent hydrolase CTN_1413 (226 aa).

The protein belongs to the UPF0173 family.

The protein is UPF0173 metal-dependent hydrolase CTN_1413 of Thermotoga neapolitana (strain ATCC 49049 / DSM 4359 / NBRC 107923 / NS-E).